The following is a 194-amino-acid chain: HTH-type transcriptional regulator BetI (194 aa).

The region spanning 8 to 68 is the HTH tetR-type domain; sequence EIRRAQLIDA…ATMRHVLRDL (61 aa). The segment at residues 31–50 is a DNA-binding region (H-T-H motif); that stretch reads TLASVAQRANISTGIVSHYF.

It participates in amine and polyamine biosynthesis; betaine biosynthesis via choline pathway [regulation]. Functionally, repressor involved in the biosynthesis of the osmoprotectant glycine betaine. It represses transcription of the choline transporter BetT and the genes of BetAB involved in the synthesis of glycine betaine. This is HTH-type transcriptional regulator BetI from Burkholderia lata (strain ATCC 17760 / DSM 23089 / LMG 22485 / NCIMB 9086 / R18194 / 383).